A 210-amino-acid chain; its full sequence is Proteasome subunit beta (210 aa).

Positions 1-10 are cleaved as a propeptide — removed in mature form; by autocatalysis; sequence MKELDQLTKG. Catalysis depends on threonine 11, which acts as the Nucleophile.

Belongs to the peptidase T1B family. In terms of assembly, the 20S proteasome core is composed of 14 alpha and 14 beta subunits that assemble into four stacked heptameric rings, resulting in a barrel-shaped structure. The two inner rings, each composed of seven catalytic beta subunits, are sandwiched by two outer rings, each composed of seven alpha subunits. The catalytic chamber with the active sites is on the inside of the barrel. Has a gated structure, the ends of the cylinder being occluded by the N-termini of the alpha-subunits. Is capped at one or both ends by the proteasome regulatory ATPase, PAN.

The protein localises to the cytoplasm. It carries out the reaction Cleavage of peptide bonds with very broad specificity.. Its activity is regulated as follows. The formation of the proteasomal ATPase PAN-20S proteasome complex, via the docking of the C-termini of PAN into the intersubunit pockets in the alpha-rings, triggers opening of the gate for substrate entry. Interconversion between the open-gate and close-gate conformations leads to a dynamic regulation of the 20S proteasome proteolysis activity. In terms of biological role, component of the proteasome core, a large protease complex with broad specificity involved in protein degradation. This chain is Proteasome subunit beta, found in Methanopyrus kandleri (strain AV19 / DSM 6324 / JCM 9639 / NBRC 100938).